We begin with the raw amino-acid sequence, 375 residues long: Probable pectin lyase D (375 aa).

The first 19 residues, 1–19, serve as a signal peptide directing secretion; sequence MKYAAVLTTVAALASRALG. Cystine bridges form between Cys-82–Cys-101 and Cys-91–Cys-225. Asn-128 carries N-linked (GlcNAc...) asparagine glycosylation. The active site involves Arg-255. A disulfide bridge connects residues Cys-321 and Cys-329.

Belongs to the polysaccharide lyase 1 family.

The protein localises to the secreted. The catalysed reaction is Eliminative cleavage of (1-&gt;4)-alpha-D-galacturonan methyl ester to give oligosaccharides with 4-deoxy-6-O-methyl-alpha-D-galact-4-enuronosyl groups at their non-reducing ends.. Functionally, pectinolytic enzymes consist of four classes of enzymes: pectin lyase, polygalacturonase, pectin methylesterase and rhamnogalacturonase. Among pectinolytic enzymes, pectin lyase is the most important in depolymerization of pectin, since it cleaves internal glycosidic bonds of highly methylated pectins. The sequence is that of Probable pectin lyase D (pelD) from Aspergillus flavus (strain ATCC 200026 / FGSC A1120 / IAM 13836 / NRRL 3357 / JCM 12722 / SRRC 167).